Here is a 1000-residue protein sequence, read N- to C-terminus: MVIASLESTHAISTSIVLSSDLWTEFYGTESVSSASPNYVKLTLPSYNKWHHQALISHCDNDDSLPFGSAGLPTNFIKQSQVRPMFSSIEIEPYVQQLPNLDNLVLSLNPDLFNELNQLSKEEQRKFLTLRFNLLFGITVLNVNQVVYPAFCKVTSSSNDFGILTDQTQIVLVPDSNVVEQSRSNDEFTEFDHLFSLHVKIQSLLDPVPVEFLSPPQPDTTDNDLFAFVQPNILLQLGVPSGTFVRVIAEEQEMLVQLFVLFAPNEYECDSLYVSPRVRYVFMNHARVIIQRPNLALNRFSVSNAVTLSRIGCQINAQRRYQDIISHHLALYFSEKQRIVKVGDLIPITFDSNYASMFTDDIRSGQHDTLVWFKVEEIESDSNEEYHIIDSSITRLSTVKITSRELMPKSICDYDRFYNLSPLFHYDEDAFPFAKRLKDILNTAIKCSARNVNVGTSIMLHSSSPNVGKTMLTRSVCAELGFHLIHVDCLSLTSNSNTSDATNKTIGYIRAKIETIISYVEKVVIFLSHLETILEDEQNQQDNTSSKMARQMNVEMADLIEEYTTKYKGTVFVGSTNDIDNIPAIVRSRIKFEIDVPVPTEKQRLQMFRWYFDPYVLNSQTPKLRSLISHNVPLQTVSVQSAGLTPMDIRSIVKAVKYKCYQRLKQNDLLIDMTDITAVINIARDRFSDSIGAPKIPNVTWDDIGGMDVVKGEIMDTIDMPLKHPELFSSGMKKRSGILFYGPPGTGKTLLAKAIASNFSLNFFSVKGPELLNMYIGESEANVRRVFQKARDAKPCVIFFDELDSVAPKRGNQGDSGGVMDRIVSQLLAELDGMSSGGDGVFVIGATNRPDLLDEALLRPGRFDKMLYLGISDTDKKQANIIKALTRKFTLESGIDILDIAKKCPFNYTGADFYALCSDALLNAMTRVAGEVDEKWEKYNMENKKNISLRYWFDNVANENDLKVVVKLQDFELAQQNLIPSVSEDELRHYLRLKSSFESQ.

Residue 742 to 749 (GPPGTGKT) coordinates ATP.

The protein belongs to the AAA ATPase family. In terms of assembly, interacts with PEX1; forming the PEX1-PEX6 AAA ATPase complex, which is composed of a heterohexamer formed by a trimer of PEX1-PEX6 dimers.

The protein resides in the cytoplasm. Its subcellular location is the cytosol. The protein localises to the peroxisome membrane. The catalysed reaction is ATP + H2O = ADP + phosphate + H(+). Functionally, component of the PEX1-PEX6 AAA ATPase complex, a protein dislocase complex that mediates the ATP-dependent extraction of the PEX5 receptor from peroxisomal membranes, an essential step for PEX5 recycling. Specifically recognizes PEX5 monoubiquitinated at 'Cys-6', and pulls it out of the peroxisome lumen through the PEX2-PEX10-PEX12 retrotranslocation channel. Extraction by the PEX1-PEX6 AAA ATPase complex is accompanied by unfolding of the TPR repeats and release of bound cargo from PEX5. This chain is Peroxisomal ATPase PEX6 (PEX6), found in Kluyveromyces lactis (strain ATCC 8585 / CBS 2359 / DSM 70799 / NBRC 1267 / NRRL Y-1140 / WM37) (Yeast).